We begin with the raw amino-acid sequence, 103 residues long: Large ribosomal subunit protein bL21 (103 aa).

Belongs to the bacterial ribosomal protein bL21 family. As to quaternary structure, part of the 50S ribosomal subunit. Contacts protein L20.

Its function is as follows. This protein binds to 23S rRNA in the presence of protein L20. The polypeptide is Large ribosomal subunit protein bL21 (Shewanella woodyi (strain ATCC 51908 / MS32)).